A 393-amino-acid chain; its full sequence is Asparagine--oxo-acid transaminase (393 aa).

Glycine 39, tryptophan 126, and asparagine 176 together coordinate L-asparagine. The residue at position 239 (lysine 239) is an N6-(pyridoxal phosphate)lysine. Arginine 370 lines the L-asparagine pocket.

Belongs to the class-I pyridoxal-phosphate-dependent aminotransferase family. Pyridoxal 5'-phosphate is required as a cofactor.

The enzyme catalyses a 2-oxocarboxylate + L-asparagine = 2-oxosuccinamate + an L-alpha-amino acid. It catalyses the reaction L-asparagine + 2-oxoglutarate = 2-oxosuccinamate + L-glutamate. In terms of biological role, catalyzes the transamination reaction between L-asparagine and 2-oxoglutarate to produce L-glutamate and 2-oxosuccinamate. Is not active with pyruvate as amine acceptor. May also use other amino acids as substrates. In Streptococcus mutans serotype c (strain ATCC 700610 / UA159), this protein is Asparagine--oxo-acid transaminase.